The sequence spans 162 residues: SCF ubiquitin ligase complex protein SKP1b (162 aa).

The residue at position 2 (S2) is an N-acetylserine. The tract at residues 100 to 162 is interaction with the F-box domain of F-box proteins; that stretch reads ILAANYLDIK…NEWCEDKGGN (63 aa). P143 carries the 4-hydroxyproline modification. An O-linked (GlcNAc...) hydroxyproline glycan is attached at P143.

This sequence belongs to the SKP1 family. As to quaternary structure, multiprotein complex (SCF) with cullin and F-box-containing protein. Capable of undergoing aggregation. Post-translationally, O-linked glycan consists of linear Gal-Gal-Fuc-Gal-GlcNAc. Not glycosylated in prespore cells. In terms of processing, fpaA and fpaB seem to be identically glycosylated. Glycosylation is required for nuclear enrichment. Post-translationally, hydroxylated by phyA.

The protein localises to the cytoplasm. It is found in the nucleus. This is SCF ubiquitin ligase complex protein SKP1b (fpaB-1) from Dictyostelium discoideum (Social amoeba).